We begin with the raw amino-acid sequence, 889 residues long: Oxysterol-binding protein-related protein 8 (889 aa).

Met-1 bears the N-acetylmethionine mark. Residues 1–129 (MEAALADGEP…SLKVQKKNYR (129 aa)) are disordered. Phosphoserine occurs at positions 14, 65, and 68. Residues 62-71 (PSLSPASLHS) are compositionally biased toward polar residues. Basic and acidic residues-rich tracts occupy residues 73 to 88 (GFER…KDDS), 95 to 109 (SKSE…EKDS), and 116 to 129 (TKKE…KNYR). In terms of domain architecture, PH spans 148-265 (VIVMADWLKI…WMDALELALK (118 aa)). A phosphoserine mark is found at Ser-314, Ser-328, and Ser-342. Over residues 321–336 (FKDQDLYSDKSDKEND) the composition is skewed to basic and acidic residues. The interval 321 to 374 (FKDQDLYSDKSDKENDPEHDESDNEVLGKSEESDTDTSERQDDSYIDPEPVEPL) is disordered. Over residues 346-363 (VLGKSEESDTDTSERQDD) the composition is skewed to basic and acidic residues. A 1,2-diacyl-sn-glycero-3-phospho-(1D-myo-inositol 4-phosphate) contacts are provided by residues 420–425 (LSRVVL), 482–485 (KPYN), and 514–515 (HH). A 1,2-diacyl-sn-glycero-3-phospho-L-serine-binding positions include 420–425 (LSRVVL) and Asn-485. A 1,2-diacyl-sn-glycero-3-phospho-L-serine is bound at residue Ser-540. Positions 706, 710, and 714 each coordinate a 1,2-diacyl-sn-glycero-3-phospho-(1D-myo-inositol 4-phosphate). Residues 772–823 (HRTPMVSVPKMKHKPTRQQKKVVKGYSSPEPDIQDSSGSEAQSVKPSTRRKK) are disordered. The span at 781–794 (KMKHKPTRQQKKVV) shows a compositional bias: basic residues. The segment covering 805 to 817 (QDSSGSEAQSVKP) has biased composition (polar residues). Ser-807, Ser-808, Ser-810, and Ser-814 each carry phosphoserine. The helical transmembrane segment at 871 to 888 (YFVIFLLILLQVIINFIF) threads the bilayer.

The protein belongs to the OSBP family. Interacts with SPAG5. Interacts with NUP62. In terms of tissue distribution, widely expressed. Most abundant in liver, spleen, kidney, brain and adipose tissue.

The protein resides in the endoplasmic reticulum membrane. It localises to the nucleus membrane. Lipid transporter involved in lipid countertransport between the endoplasmic reticulum and the plasma membrane: specifically exchanges phosphatidylserine with phosphatidylinositol 4-phosphate (PI4P), delivering phosphatidylserine to the plasma membrane in exchange for PI4P, which is degraded by the SAC1/SACM1L phosphatase in the endoplasmic reticulum. Binds phosphatidylserine and PI4P in a mutually exclusive manner. Binds oxysterol, 25-hydroxycholesterol and cholesterol. This chain is Oxysterol-binding protein-related protein 8, found in Mus musculus (Mouse).